Here is a 313-residue protein sequence, read N- to C-terminus: D-apiose import binding protein (313 aa).

The signal sequence occupies residues 1–26 (MKLTRRLTLAAFASVLALGTAAPAFS). Residues asparagine 39, 115-116 (DR), 162-164 (DTN), arginine 168, asparagine 218, aspartate 243, and glutamine 263 each bind D-apiofuranose.

This sequence belongs to the bacterial solute-binding protein 2 family.

Its subcellular location is the periplasm. Its function is as follows. Part of an ABC transporter complex involved in D-apiose import. This Rhizobium rhizogenes (strain K84 / ATCC BAA-868) (Agrobacterium radiobacter) protein is D-apiose import binding protein.